The sequence spans 451 residues: uncharacterized protein (451 aa).

The Mn(2+) site is built by Asp305, Asp316, His384, Glu414, and Glu428.

It belongs to the peptidase M24B family. It depends on Mn(2+) as a cofactor.

This is an uncharacterized protein from Schizosaccharomyces pombe (strain 972 / ATCC 24843) (Fission yeast).